Reading from the N-terminus, the 170-residue chain is Probable inactive uracil-DNA glycosylase, mitochondrial (170 aa).

The N-terminal 53 residues, 1-53 (MALSTPKTLMDFFQPAKRLKASPSSSSSFPAVSVAGRSRDLGSVANSPPRVTV), are a transit peptide targeting the mitochondrion.

The protein belongs to the uracil-DNA glycosylase (UDG) superfamily. UNG family.

The protein localises to the mitochondrion. Probable inactive paralog of AtUNG (AC Q9LIH6) generated by a gene duplication event and subsequently disrupted by at least two transposon insertions. In Arabidopsis thaliana (Mouse-ear cress), this protein is Probable inactive uracil-DNA glycosylase, mitochondrial.